The following is a 358-amino-acid chain: UDP-N-acetylglucosamine--N-acetylmuramyl-(pentapeptide) pyrophosphoryl-undecaprenol N-acetylglucosamine transferase (358 aa).

Residues 10-12, Asn124, Ser196, and Gln293 each bind UDP-N-acetyl-alpha-D-glucosamine; that span reads TGG.

It belongs to the glycosyltransferase 28 family. MurG subfamily.

It is found in the cell membrane. The catalysed reaction is di-trans,octa-cis-undecaprenyl diphospho-N-acetyl-alpha-D-muramoyl-L-alanyl-D-glutamyl-meso-2,6-diaminopimeloyl-D-alanyl-D-alanine + UDP-N-acetyl-alpha-D-glucosamine = di-trans,octa-cis-undecaprenyl diphospho-[N-acetyl-alpha-D-glucosaminyl-(1-&gt;4)]-N-acetyl-alpha-D-muramoyl-L-alanyl-D-glutamyl-meso-2,6-diaminopimeloyl-D-alanyl-D-alanine + UDP + H(+). It participates in cell wall biogenesis; peptidoglycan biosynthesis. Functionally, cell wall formation. Catalyzes the transfer of a GlcNAc subunit on undecaprenyl-pyrophosphoryl-MurNAc-pentapeptide (lipid intermediate I) to form undecaprenyl-pyrophosphoryl-MurNAc-(pentapeptide)GlcNAc (lipid intermediate II). The protein is UDP-N-acetylglucosamine--N-acetylmuramyl-(pentapeptide) pyrophosphoryl-undecaprenol N-acetylglucosamine transferase of Exiguobacterium sp. (strain ATCC BAA-1283 / AT1b).